A 416-amino-acid polypeptide reads, in one-letter code: Serine hydroxymethyltransferase (416 aa).

(6S)-5,6,7,8-tetrahydrofolate contacts are provided by residues L121 and 125 to 127 (GHL). K229 carries the N6-(pyridoxal phosphate)lysine modification.

The protein belongs to the SHMT family. In terms of assembly, homodimer. Pyridoxal 5'-phosphate is required as a cofactor.

It localises to the cytoplasm. It catalyses the reaction (6R)-5,10-methylene-5,6,7,8-tetrahydrofolate + glycine + H2O = (6S)-5,6,7,8-tetrahydrofolate + L-serine. Its pathway is one-carbon metabolism; tetrahydrofolate interconversion. It functions in the pathway amino-acid biosynthesis; glycine biosynthesis; glycine from L-serine: step 1/1. Its function is as follows. Catalyzes the reversible interconversion of serine and glycine with tetrahydrofolate (THF) serving as the one-carbon carrier. This reaction serves as the major source of one-carbon groups required for the biosynthesis of purines, thymidylate, methionine, and other important biomolecules. Also exhibits THF-independent aldolase activity toward beta-hydroxyamino acids, producing glycine and aldehydes, via a retro-aldol mechanism. The sequence is that of Serine hydroxymethyltransferase from Azoarcus sp. (strain BH72).